The sequence spans 273 residues: Large ribosomal subunit protein uL2 (273 aa).

The tract at residues Arg-221 to Arg-262 is disordered. Positions Lys-253–Arg-262 are enriched in basic residues.

The protein belongs to the universal ribosomal protein uL2 family. Part of the 50S ribosomal subunit. Forms a bridge to the 30S subunit in the 70S ribosome.

Its function is as follows. One of the primary rRNA binding proteins. Required for association of the 30S and 50S subunits to form the 70S ribosome, for tRNA binding and peptide bond formation. It has been suggested to have peptidyltransferase activity; this is somewhat controversial. Makes several contacts with the 16S rRNA in the 70S ribosome. The chain is Large ribosomal subunit protein uL2 from Aggregatibacter actinomycetemcomitans (Actinobacillus actinomycetemcomitans).